The sequence spans 98 residues: U-scoloptoxin(16)-Er9a (98 aa).

The signal sequence occupies residues 1-24 (MVSYLCMSVSSGWLSIGKIAIKDG).

This sequence belongs to the scoloptoxin-16 family. Post-translationally, contains 4 disulfide bonds. Expressed by the venom gland.

The protein resides in the secreted. The sequence is that of U-scoloptoxin(16)-Er9a from Ethmostigmus rubripes (Giant centipede).